A 133-amino-acid polypeptide reads, in one-letter code: Small ribosomal subunit protein uS8 (133 aa).

Belongs to the universal ribosomal protein uS8 family. As to quaternary structure, part of the 30S ribosomal subunit. Contacts proteins S5 and S12.

Functionally, one of the primary rRNA binding proteins, it binds directly to 16S rRNA central domain where it helps coordinate assembly of the platform of the 30S subunit. The sequence is that of Small ribosomal subunit protein uS8 from Prochlorococcus marinus (strain MIT 9301).